A 246-amino-acid polypeptide reads, in one-letter code: Probable transcriptional regulatory protein Dshi_2762 (246 aa).

The protein belongs to the TACO1 family.

The protein resides in the cytoplasm. The chain is Probable transcriptional regulatory protein Dshi_2762 from Dinoroseobacter shibae (strain DSM 16493 / NCIMB 14021 / DFL 12).